The following is a 360-amino-acid chain: 3-isopropylmalate dehydrogenase (360 aa).

76-89 is a binding site for NAD(+); sequence GPKWDKIERDIRPE. Positions 96, 106, 134, and 224 each coordinate substrate. Mg(2+) contacts are provided by D224, D248, and D252. An NAD(+)-binding site is contributed by 282 to 294; it reads GSAPDIAGLGIAN.

Belongs to the isocitrate and isopropylmalate dehydrogenases family. LeuB type 1 subfamily. Homodimer. Mg(2+) serves as cofactor. The cofactor is Mn(2+).

It localises to the cytoplasm. The catalysed reaction is (2R,3S)-3-isopropylmalate + NAD(+) = 4-methyl-2-oxopentanoate + CO2 + NADH. It participates in amino-acid biosynthesis; L-leucine biosynthesis; L-leucine from 3-methyl-2-oxobutanoate: step 3/4. Its function is as follows. Catalyzes the oxidation of 3-carboxy-2-hydroxy-4-methylpentanoate (3-isopropylmalate) to 3-carboxy-4-methyl-2-oxopentanoate. The product decarboxylates to 4-methyl-2 oxopentanoate. The protein is 3-isopropylmalate dehydrogenase of Pseudomonas putida (strain ATCC 47054 / DSM 6125 / CFBP 8728 / NCIMB 11950 / KT2440).